The following is a 327-amino-acid chain: GMP reductase (327 aa).

C176 acts as the Thioimidate intermediate in catalysis. 205 to 228 serves as a coordination point for NADP(+); the sequence is IIADGGIRTHGDIAKSIRFGASMV.

Belongs to the IMPDH/GMPR family. GuaC type 2 subfamily.

It catalyses the reaction IMP + NH4(+) + NADP(+) = GMP + NADPH + 2 H(+). Its function is as follows. Catalyzes the irreversible NADPH-dependent deamination of GMP to IMP. It functions in the conversion of nucleobase, nucleoside and nucleotide derivatives of G to A nucleotides, and in maintaining the intracellular balance of A and G nucleotides. The chain is GMP reductase from Streptococcus pyogenes serotype M6 (strain ATCC BAA-946 / MGAS10394).